A 325-amino-acid chain; its full sequence is Metacaspase-9 (325 aa).

Catalysis depends on residues histidine 95 and cysteine 147. S-nitrosocysteine is present on cysteine 147. Asparagine 177 carries an N-linked (GlcNAc...) asparagine glycan.

Belongs to the peptidase C14B family. In terms of processing, the two subunits are derived from the precursor sequence by an autocatalytic mechanism. S-nitrosylation at Cys-147 suppresses both autoprocessing and proteolytic activity of the full-length protein, but does not affect the activity of the mature processed form. As to expression, expressed in root tips, cauline leaves, flowers and siliques.

It is found in the secreted. The protein localises to the extracellular space. The protein resides in the apoplast. Its activity is regulated as follows. Inhibited by serpin ZX and nitric oxide through cysteine nitrosylation. Cysteine protease that cleaves specifically after arginine or lysine residues. Does not cleave caspase-specific substrates. Required for proteolytic processing of GRI. The protein is Metacaspase-9 (AMC9) of Arabidopsis thaliana (Mouse-ear cress).